A 162-amino-acid polypeptide reads, in one-letter code: 2-C-methyl-D-erythritol 2,4-cyclodiphosphate synthase (162 aa).

Residues D12 and H14 each coordinate a divalent metal cation. 4-CDP-2-C-methyl-D-erythritol 2-phosphate-binding positions include D12 to H14 and H38 to S39. H46 serves as a coordination point for a divalent metal cation. 4-CDP-2-C-methyl-D-erythritol 2-phosphate contacts are provided by residues D60 to G62, F65 to D69, and R146.

The protein belongs to the IspF family. As to quaternary structure, homotrimer. A divalent metal cation serves as cofactor.

The enzyme catalyses 4-CDP-2-C-methyl-D-erythritol 2-phosphate = 2-C-methyl-D-erythritol 2,4-cyclic diphosphate + CMP. It functions in the pathway isoprenoid biosynthesis; isopentenyl diphosphate biosynthesis via DXP pathway; isopentenyl diphosphate from 1-deoxy-D-xylulose 5-phosphate: step 4/6. Its function is as follows. Involved in the biosynthesis of isopentenyl diphosphate (IPP) and dimethylallyl diphosphate (DMAPP), two major building blocks of isoprenoid compounds. Catalyzes the conversion of 4-diphosphocytidyl-2-C-methyl-D-erythritol 2-phosphate (CDP-ME2P) to 2-C-methyl-D-erythritol 2,4-cyclodiphosphate (ME-CPP) with a corresponding release of cytidine 5-monophosphate (CMP). This chain is 2-C-methyl-D-erythritol 2,4-cyclodiphosphate synthase, found in Bordetella petrii (strain ATCC BAA-461 / DSM 12804 / CCUG 43448).